A 339-amino-acid polypeptide reads, in one-letter code: Endo-beta-N-acetylglucosaminidase F1 (339 aa).

The segment at residues Met-1–Ala-50 is a signal peptide (or 51, or 52). Residues Ile-60–Asp-326 enclose the GH18 domain. Glu-182 functions as the Proton donor in the catalytic mechanism. A propeptide (removed in mature form) is located at residue Trp-339.

It belongs to the glycosyl hydrolase 18 family. In terms of assembly, monomer.

It localises to the secreted. The catalysed reaction is an N(4)-(oligosaccharide-(1-&gt;3)-[oligosaccharide-(1-&gt;6)]-beta-D-Man-(1-&gt;4)-beta-D-GlcNAc-(1-&gt;4)-alpha-D-GlcNAc)-L-asparaginyl-[protein] + H2O = an oligosaccharide-(1-&gt;3)-[oligosaccharide-(1-&gt;6)]-beta-D-Man-(1-&gt;4)-D-GlcNAc + N(4)-(N-acetyl-beta-D-glucosaminyl)-L-asparaginyl-[protein]. Its function is as follows. Endohydrolysis of the di-N-acetylchitobiosyl unit in high-mannose glycopeptides and glycoproteins. Does not hydrolyze complex bi- or triantennary glycans. The presence of a core-bound fucose impedes endo F1 hydrolysis. This Elizabethkingia meningoseptica (Chryseobacterium meningosepticum) protein is Endo-beta-N-acetylglucosaminidase F1 (endOF1).